We begin with the raw amino-acid sequence, 62 residues long: Sauvatide (62 aa).

A signal peptide spans 1–24 (MDILKKSLFLILFLGLVSISFCDG). Positions 25 to 46 (EKRQDDDEANESEEKKEIHEVE) are excised as a propeptide. Lysine amide is present on Lys58.

As to expression, expressed by the skin glands.

Its subcellular location is the secreted. Functionally, induces contraction of smooth muscle in isolated rat urinary bladder with an EC(50) value of 2.2nM. This Phyllomedusa sauvagei (Sauvage's leaf frog) protein is Sauvatide.